Reading from the N-terminus, the 120-residue chain is Large ribosomal subunit protein bL19 (120 aa).

The protein belongs to the bacterial ribosomal protein bL19 family.

Its function is as follows. This protein is located at the 30S-50S ribosomal subunit interface and may play a role in the structure and function of the aminoacyl-tRNA binding site. This Chlorobium luteolum (strain DSM 273 / BCRC 81028 / 2530) (Pelodictyon luteolum) protein is Large ribosomal subunit protein bL19.